The sequence spans 304 residues: Neurexophilin-4 (304 aa).

The N-terminal stretch at 1–23 is a signal peptide; that stretch reads MRLLPEWLLLLFGPWLLRKVISG. An II region spans residues 24-84; sequence QIVESGRPQY…GALARPGAAG (61 aa). Residues Asn-72, Asn-133, Asn-143, and Asn-149 are each glycosylated (N-linked (GlcNAc...) asparagine). The tract at residues 85–163 is III; the sequence is GPPVPRTKRK…IVPPSKRVEF (79 aa). The IV (linker domain) stretch occupies residues 164–220; sequence GGVWLPGPAPHPLQSTLALEGVLPGLGPPLGMAGQGLGGNLGGALAGPLGGALGVPG. A v (Cys-rich) region spans residues 221–304; the sequence is AKESRAFNCH…NFQSEHPYFG (84 aa).

It belongs to the neurexophilin family. In terms of processing, may be proteolytically processed in neuron-like cells. Brain and kidney.

It localises to the secreted. May be signaling molecules that resemble neuropeptides and that act by binding to alpha-neurexins and possibly other receptors. This Rattus norvegicus (Rat) protein is Neurexophilin-4 (Nxph4).